A 155-amino-acid polypeptide reads, in one-letter code: Transcriptional repressor NrdR (155 aa).

Residues 1–10 (MQCPHCHHNS) are compositionally biased toward basic residues. Positions 1–21 (MQCPHCHHNSSRVVDSRPTDG) are disordered. A zinc finger spans residues 3–34 (CPHCHHNSSRVVDSRPTDGGRAIRRRRECENC). Residues 49–139 (LLVIKKNGTR…VYRQFKDMSV (91 aa)) enclose the ATP-cone domain.

The protein belongs to the NrdR family. It depends on Zn(2+) as a cofactor.

Its function is as follows. Negatively regulates transcription of bacterial ribonucleotide reductase nrd genes and operons by binding to NrdR-boxes. This is Transcriptional repressor NrdR from Lacticaseibacillus casei (strain BL23) (Lactobacillus casei).